The following is a 188-amino-acid chain: Potassium-transporting ATPase KdpC subunit (188 aa).

The chain crosses the membrane as a helical span at residues 13–33; sequence MTAIFWIGCGLAYPLIFTGFA.

Belongs to the KdpC family. As to quaternary structure, the system is composed of three essential subunits: KdpA, KdpB and KdpC.

It localises to the cell inner membrane. In terms of biological role, part of the high-affinity ATP-driven potassium transport (or Kdp) system, which catalyzes the hydrolysis of ATP coupled with the electrogenic transport of potassium into the cytoplasm. This subunit acts as a catalytic chaperone that increases the ATP-binding affinity of the ATP-hydrolyzing subunit KdpB by the formation of a transient KdpB/KdpC/ATP ternary complex. This chain is Potassium-transporting ATPase KdpC subunit, found in Gloeobacter violaceus (strain ATCC 29082 / PCC 7421).